We begin with the raw amino-acid sequence, 66 residues long: Large ribosomal subunit protein bL35 (66 aa).

This sequence belongs to the bacterial ribosomal protein bL35 family.

This chain is Large ribosomal subunit protein bL35, found in Moorella thermoacetica (strain ATCC 39073 / JCM 9320).